A 200-amino-acid polypeptide reads, in one-letter code: dTDP-4-dehydrorhamnose 3,5-epimerase (200 aa).

Substrate-binding positions include Arg21, Glu26, 45-47 (QVN), and Arg57. Catalysis depends on His60, which acts as the Proton acceptor. Substrate-binding residues include Lys70 and His116. Tyr129 acts as the Proton donor in catalysis. 2 residues coordinate substrate: Glu140 and Lys165.

This sequence belongs to the dTDP-4-dehydrorhamnose 3,5-epimerase family.

It catalyses the reaction dTDP-4-dehydro-6-deoxy-alpha-D-glucose = dTDP-4-dehydro-beta-L-rhamnose. The protein operates within carbohydrate biosynthesis; dTDP-L-rhamnose biosynthesis. It functions in the pathway antibiotic biosynthesis; streptomycin biosynthesis. Its function is as follows. Involved in the biosynthesis of the dihydrostreptose moiety of streptomycin. Catalyzes the epimerization of the C3' and C5'positions of dTDP-6-deoxy-D-xylo-4-hexulose, forming dTDP-6-deoxy-L-lyxo-4-hexulose. The protein is dTDP-4-dehydrorhamnose 3,5-epimerase of Streptomyces griseus.